A 46-amino-acid chain; its full sequence is uncharacterized protein (46 aa).

This is an uncharacterized protein from Bacillus subtilis (strain 168).